Here is a 299-residue protein sequence, read N- to C-terminus: MYFPIVALIGRYQDTGLDAPLTALAQMLTQAGRRVLVEAETARNAGVSGYPVADWDEIGRTATLAVVMGGDGTVLGAARHLAPYGVPLIGINHGRLGFITDIPLQDAHDALGRVLEGNYQAEDRMLLQGGVWRGEQQMYSASAVNDVVLNRAGRGGMIEVRVELDGAFMYTQRADGLIIATPTGSTAYSLSANGPILHPGMNAMVLVPVAPQTLSNRPIVIPDSGVLNMTLTAMGRVEIGASVHFDMQTWSDLQPGDRITVQRAPHTIRFVHPEGYSFFSTLRRKLHWNLMPQATDNLE.

The Proton acceptor role is filled by Asp-71. NAD(+) contacts are provided by residues 71-72, 145-146, Arg-173, Asp-175, 186-191, Ala-210, and Gln-248; these read DG, ND, and TAYSLS.

The protein belongs to the NAD kinase family. It depends on a divalent metal cation as a cofactor.

It is found in the cytoplasm. The catalysed reaction is NAD(+) + ATP = ADP + NADP(+) + H(+). Involved in the regulation of the intracellular balance of NAD and NADP, and is a key enzyme in the biosynthesis of NADP. Catalyzes specifically the phosphorylation on 2'-hydroxyl of the adenosine moiety of NAD to yield NADP. This Bordetella bronchiseptica (strain ATCC BAA-588 / NCTC 13252 / RB50) (Alcaligenes bronchisepticus) protein is NAD kinase.